The sequence spans 352 residues: Divinyl chlorophyll a/b light-harvesting protein PcbA (352 aa).

Helical transmembrane passes span 27–47, 90–110, 142–162, 203–223, 243–263, and 306–326; these read FIAA…AFTL, VLAI…GGLL, FILG…VEWA, VMGG…WHIA, AVLS…AFWS, and LANV…WHAL.

It belongs to the PsbB/PsbC family. IsiA/Pcb subfamily. The antenna complex consists of divinyl chlorophylls (a and b) and divinyl chlorophyll a/b binding proteins and binds less divinyl chlorophyll b than does low-light-adapted Prochlorococcus. Also forms complexes with PSII, consisting of a PSII dimer and 4 or 8 PcbA subunits. These complexes are also found under conditions of iron-starvation. Divinyl chlorophyll a serves as cofactor. Requires divinyl chlorophyll b as cofactor.

It localises to the cellular thylakoid membrane. Its function is as follows. The antenna complex functions as a light receptor, it captures and delivers excitation energy to photosystem II and possibly to photosystem I. The Prochlorales pcb genes are not related to higher plant LHCs. In Prochlorococcus marinus subsp. pastoris (strain CCMP1986 / NIES-2087 / MED4), this protein is Divinyl chlorophyll a/b light-harvesting protein PcbA (pcbA).